Consider the following 1030-residue polypeptide: Carbamoyl phosphate synthase arginine-specific large chain (1030 aa).

Residues 1–401 (MPKDTSISSI…AIQKAAASLE (401 aa)) are carboxyphosphate synthetic domain. Residues arginine 129, arginine 169, glycine 175, glycine 176, lysine 208, isoleucine 210, glutamate 215, glycine 241, valine 242, histidine 243, glutamine 284, and glutamate 298 each contribute to the ATP site. In terms of domain architecture, ATP-grasp 1 spans 133–327 (RSLMNELKQP…IAKMAAKLAV (195 aa)). Mg(2+) contacts are provided by glutamine 284, glutamate 298, and asparagine 300. Residues glutamine 284, glutamate 298, and asparagine 300 each coordinate Mn(2+). An oligomerization domain region spans residues 402-548 (LKNIGTHLPE…YSTYFGETDG (147 aa)). The segment at 549 to 928 (DISRKEKKRA…ALKKIYTRVW (380 aa)) is carbamoyl phosphate synthetic domain. The ATP-grasp 2 domain maps to 675–863 (YQLLDELGLK…MIPLATRLLA (189 aa)). Residues arginine 711, glutamine 748, valine 750, glutamate 754, glycine 779, valine 780, histidine 781, serine 782, glutamine 822, and glutamate 834 each contribute to the ATP site. Glutamine 822, glutamate 834, and asparagine 836 together coordinate Mg(2+). Positions 822, 834, and 836 each coordinate Mn(2+). One can recognise an MGS-like domain in the interval 925 to 1027 (TRVWSQKGSI…KDLYKKEVAS (103 aa)). The tract at residues 929–1030 (SQKGSIYLQN…YKKEVASCTQ (102 aa)) is allosteric domain.

Belongs to the CarB family. Composed of two chains; the small (or glutamine) chain promotes the hydrolysis of glutamine to ammonia, which is used by the large (or ammonia) chain to synthesize carbamoyl phosphate. Tetramer of heterodimers (alpha,beta)4. Mg(2+) is required as a cofactor. Mn(2+) serves as cofactor.

It carries out the reaction hydrogencarbonate + L-glutamine + 2 ATP + H2O = carbamoyl phosphate + L-glutamate + 2 ADP + phosphate + 2 H(+). The enzyme catalyses hydrogencarbonate + NH4(+) + 2 ATP = carbamoyl phosphate + 2 ADP + phosphate + 2 H(+). The protein operates within amino-acid biosynthesis; L-arginine biosynthesis; carbamoyl phosphate from bicarbonate: step 1/1. Large subunit of the glutamine-dependent carbamoyl phosphate synthetase (CPSase). CPSase catalyzes the formation of carbamoyl phosphate from the ammonia moiety of glutamine, carbonate, and phosphate donated by ATP, constituting the first step of the biosynthetic pathway leading to arginine and/or urea. The large subunit (synthetase) binds the substrates ammonia (free or transferred from glutamine from the small subunit), hydrogencarbonate and ATP and carries out an ATP-coupled ligase reaction, activating hydrogencarbonate by forming carboxy phosphate which reacts with ammonia to form carbamoyl phosphate. This is Carbamoyl phosphate synthase arginine-specific large chain from Bacillus subtilis (strain 168).